Consider the following 199-residue polypeptide: MTKVLVLYHSMYGHIETMANSIAEGAREVSGVEVTIKRVPETMDPARFAAAGGKTEQSAPVATPAELVDYDAIIFGVPTRFGNMTAQMRNFLDQTGGLWAKGALFGKIASVFASTGVGGGQEMTITSTWTTLAHHGMVIVPIGYGTAEMFDISHVGGGTPYGATTLAGGDGSRQPDARELAIARFQGKHVATVAAKMKG.

The 187-residue stretch at 4–190 folds into the Flavodoxin-like domain; it reads VLVLYHSMYG…AIARFQGKHV (187 aa). FMN contacts are provided by residues 10-15 and 79-81; these read SMYGHI and TRF. Y12 is an NAD(+) binding site. W99 provides a ligand contact to substrate. Residue H134 coordinates FMN.

Belongs to the WrbA family. The cofactor is FMN.

It carries out the reaction a quinone + NADH + H(+) = a quinol + NAD(+). The catalysed reaction is a quinone + NADPH + H(+) = a quinol + NADP(+). This chain is NAD(P)H dehydrogenase (quinone), found in Tolumonas auensis (strain DSM 9187 / NBRC 110442 / TA 4).